Consider the following 375-residue polypeptide: 23S rRNA (uracil(747)-C(5))-methyltransferase RlmC (375 aa).

Residues Cys3, Cys11, Cys14, and Cys87 each contribute to the [4Fe-4S] cluster site. The S-adenosyl-L-methionine site is built by Gln212, Phe241, Glu262, and Asn307. Cys334 serves as the catalytic Nucleophile.

The protein belongs to the class I-like SAM-binding methyltransferase superfamily. RNA M5U methyltransferase family. RlmC subfamily.

It carries out the reaction uridine(747) in 23S rRNA + S-adenosyl-L-methionine = 5-methyluridine(747) in 23S rRNA + S-adenosyl-L-homocysteine + H(+). Functionally, catalyzes the formation of 5-methyl-uridine at position 747 (m5U747) in 23S rRNA. The chain is 23S rRNA (uracil(747)-C(5))-methyltransferase RlmC from Escherichia coli O7:K1 (strain IAI39 / ExPEC).